Consider the following 271-residue polypeptide: Aminodeoxychorismate lyase (271 aa).

N6-(pyridoxal phosphate)lysine is present on lysine 140.

Belongs to the class-IV pyridoxal-phosphate-dependent aminotransferase family. In terms of assembly, homodimer. Requires pyridoxal 5'-phosphate as cofactor.

The catalysed reaction is 4-amino-4-deoxychorismate = 4-aminobenzoate + pyruvate + H(+). The protein operates within cofactor biosynthesis; tetrahydrofolate biosynthesis; 4-aminobenzoate from chorismate: step 2/2. In terms of biological role, involved in the biosynthesis of p-aminobenzoate (PABA), a precursor of tetrahydrofolate. Converts 4-amino-4-deoxychorismate into 4-aminobenzoate (PABA) and pyruvate. In Vibrio harveyi (Beneckea harveyi), this protein is Aminodeoxychorismate lyase (pabC).